The sequence spans 274 residues: 26S proteasome regulatory subunit RPN12 (274 aa).

The PCI domain maps to 76 to 251; the sequence is DSFENYFNQL…KADYEDEMMH (176 aa).

This sequence belongs to the proteasome subunit S14 family.

In terms of biological role, acts as a regulatory subunit of the 26S proteasome which is involved in the ATP-dependent degradation of ubiquitinated proteins. Necessary for activation of the CDC28 kinase. This chain is 26S proteasome regulatory subunit RPN12 (RPN12), found in Saccharomyces cerevisiae (strain ATCC 204508 / S288c) (Baker's yeast).